Here is a 169-residue protein sequence, read N- to C-terminus: Cell division inhibitor SulA (169 aa).

Residues 106 to 112 are ftsZ binding; that stretch reads ALRTGNY. The segment at 162–169 is lon protease binding; it reads KIHSNLYH.

It belongs to the SulA family. As to quaternary structure, interacts with FtsZ. Is rapidly cleaved and degraded by the Lon protease once DNA damage is repaired.

Its function is as follows. Component of the SOS system and an inhibitor of cell division. Accumulation of SulA causes rapid cessation of cell division and the appearance of long, non-septate filaments. In the presence of GTP, binds a polymerization-competent form of FtsZ in a 1:1 ratio, thus inhibiting FtsZ polymerization and therefore preventing it from participating in the assembly of the Z ring. This mechanism prevents the premature segregation of damaged DNA to daughter cells during cell division. The protein is Cell division inhibitor SulA of Escherichia coli O7:K1 (strain IAI39 / ExPEC).